Here is a 227-residue protein sequence, read N- to C-terminus: 7-cyano-7-deazaguanine synthase (227 aa).

8–18 (FSGGQDSTTCL) serves as a coordination point for ATP. C187, C196, C199, and C202 together coordinate Zn(2+).

Belongs to the QueC family. Requires Zn(2+) as cofactor.

The enzyme catalyses 7-carboxy-7-deazaguanine + NH4(+) + ATP = 7-cyano-7-deazaguanine + ADP + phosphate + H2O + H(+). It functions in the pathway purine metabolism; 7-cyano-7-deazaguanine biosynthesis. In terms of biological role, catalyzes the ATP-dependent conversion of 7-carboxy-7-deazaguanine (CDG) to 7-cyano-7-deazaguanine (preQ(0)). In Aliivibrio fischeri (strain ATCC 700601 / ES114) (Vibrio fischeri), this protein is 7-cyano-7-deazaguanine synthase.